The chain runs to 178 residues: Inner membrane-spanning protein YciB (178 aa).

A run of 5 helical transmembrane segments spans residues 12–32 (LFFA…VAIV), 50–70 (PMQW…LVLH), 74–94 (FIMW…LISD), 120–140 (LTFA…FVAF), and 145–165 (AVWV…FVLA).

Belongs to the YciB family.

It localises to the cell inner membrane. In terms of biological role, plays a role in cell envelope biogenesis, maintenance of cell envelope integrity and membrane homeostasis. This chain is Inner membrane-spanning protein YciB, found in Laribacter hongkongensis (strain HLHK9).